Here is a 348-residue protein sequence, read N- to C-terminus: Erythronate-4-phosphate dehydrogenase (348 aa).

Substrate-binding residues include Thr46 and Thr67. Asp147 serves as a coordination point for NAD(+). The active site involves Arg209. Asp233 provides a ligand contact to NAD(+). Residue Glu238 is part of the active site. The Proton donor role is filled by His255. Gly258 is a binding site for NAD(+). Tyr259 contributes to the substrate binding site.

Belongs to the D-isomer specific 2-hydroxyacid dehydrogenase family. PdxB subfamily. As to quaternary structure, homodimer.

Its subcellular location is the cytoplasm. The enzyme catalyses 4-phospho-D-erythronate + NAD(+) = (R)-3-hydroxy-2-oxo-4-phosphooxybutanoate + NADH + H(+). It participates in cofactor biosynthesis; pyridoxine 5'-phosphate biosynthesis; pyridoxine 5'-phosphate from D-erythrose 4-phosphate: step 2/5. Functionally, catalyzes the oxidation of erythronate-4-phosphate to 3-hydroxy-2-oxo-4-phosphonooxybutanoate. This is Erythronate-4-phosphate dehydrogenase from Bacteroides fragilis (strain ATCC 25285 / DSM 2151 / CCUG 4856 / JCM 11019 / LMG 10263 / NCTC 9343 / Onslow / VPI 2553 / EN-2).